A 107-amino-acid chain; its full sequence is UPF0122 protein MYPE4850 (107 aa).

It belongs to the UPF0122 family.

In terms of biological role, might take part in the signal recognition particle (SRP) pathway. This is inferred from the conservation of its genetic proximity to ftsY/ffh. May be a regulatory protein. The chain is UPF0122 protein MYPE4850 from Malacoplasma penetrans (strain HF-2) (Mycoplasma penetrans).